The following is a 123-amino-acid chain: Polyadenylate-binding protein-interacting protein 2B (123 aa).

The residue at position 1 (M1) is an N-acetylmethionine. The segment covering 1-13 has biased composition (polar residues); sequence MNGSNMANTSPSV. 2 disordered regions span residues 1–30 and 91–123; these read MNGS…KENP and NGLS…GEKY. Basic and acidic residues-rich tracts occupy residues 14–30 and 113–123; these read KSKE…KENP and DAKEFIPGEKY.

This sequence belongs to the PAIP2 family. In terms of assembly, interacts (via central acidic portion and C-terminus) with PABPC1 (via the second and third RRM domains and the C-terminus). Post-translationally, ubiquitinated in vitro. In terms of tissue distribution, expressed in brain, cervix, heart, liver, ovary, kidney, prostate and testis.

Functionally, inhibits translation of capped and polyadenylated mRNAs by displacing PABPC1 from the poly(A) tail. This is Polyadenylate-binding protein-interacting protein 2B (PAIP2B) from Homo sapiens (Human).